Here is a 97-residue protein sequence, read N- to C-terminus: Eotaxin (97 aa).

A signal peptide spans 1 to 23; the sequence is MQSSTALLFLLLTVTSFTSQVLA. Disulfide bonds link Cys-32–Cys-57 and Cys-33–Cys-73. O-linked (GalNAc...) threonine glycosylation is present at Thr-94.

Belongs to the intercrine beta (chemokine CC) family. In terms of tissue distribution, expressed constitutively in the thymus. Expression inducible in the lung (type I alveolar epithelial cells), intestine, heart, spleen, kidney.

It localises to the secreted. Functionally, in response to the presence of allergens, this protein directly promotes the accumulation of eosinophils (a prominent feature of allergic inflammatory reactions), but not lymphocytes, macrophages or neutrophils. Binds to CCR3. This chain is Eotaxin (Ccl11), found in Mus musculus (Mouse).